The chain runs to 578 residues: Arginine--tRNA ligase (578 aa).

The 'HIGH' region motif lies at 127-137 (PNLAKEMHVGH).

Belongs to the class-I aminoacyl-tRNA synthetase family. In terms of assembly, monomer.

It localises to the cytoplasm. The catalysed reaction is tRNA(Arg) + L-arginine + ATP = L-arginyl-tRNA(Arg) + AMP + diphosphate. The sequence is that of Arginine--tRNA ligase from Pseudomonas fluorescens (strain ATCC BAA-477 / NRRL B-23932 / Pf-5).